Reading from the N-terminus, the 349-residue chain is Protein RecA (349 aa).

Residue 65 to 72 participates in ATP binding; sequence GPESSGKT.

It belongs to the RecA family.

The protein localises to the cytoplasm. In terms of biological role, can catalyze the hydrolysis of ATP in the presence of single-stranded DNA, the ATP-dependent uptake of single-stranded DNA by duplex DNA, and the ATP-dependent hybridization of homologous single-stranded DNAs. It interacts with LexA causing its activation and leading to its autocatalytic cleavage. In Azotobacter vinelandii, this protein is Protein RecA.